Here is a 377-residue protein sequence, read N- to C-terminus: tRNA-specific 2-thiouridylase MnmA (377 aa).

ATP-binding positions include 8–15 (GMSGGVDS) and Met-34. Residues 94–96 (NPD) form an interaction with target base in tRNA region. Cys-99 functions as the Nucleophile in the catalytic mechanism. A disulfide bond links Cys-99 and Cys-201. Gly-123 contacts ATP. An interaction with tRNA region spans residues 151-153 (KDQ). Catalysis depends on Cys-201, which acts as the Cysteine persulfide intermediate. An interaction with tRNA region spans residues 315–316 (RY).

It belongs to the MnmA/TRMU family.

It localises to the cytoplasm. The catalysed reaction is S-sulfanyl-L-cysteinyl-[protein] + uridine(34) in tRNA + AH2 + ATP = 2-thiouridine(34) in tRNA + L-cysteinyl-[protein] + A + AMP + diphosphate + H(+). Its function is as follows. Catalyzes the 2-thiolation of uridine at the wobble position (U34) of tRNA, leading to the formation of s(2)U34. This chain is tRNA-specific 2-thiouridylase MnmA, found in Acinetobacter baumannii (strain ACICU).